The following is a 1181-amino-acid chain: WD repeat-containing protein 35 (1181 aa).

WD repeat units follow at residues 12–51 (PNNV…DDSK), 69–108 (GHSG…WYEE), 113–152 (RNKS…IWGK), 154–193 (LKGI…IMKM), and 502–539 (GTRD…LIQK).

In terms of assembly, component of the IFT complex A (IFT-A) complex. IFT-A complex is divided into a core subcomplex composed of IFT122:IFT140:WDR19 which is associated with TULP3 and a peripheral subcomplex composed of IFT43:WDR35:TTC21B. Interacts directy with IFT122, ITF43 and TTC21B. Interacts with IFT43. Interacts with CFAP61.

It is found in the cytoplasm. Its subcellular location is the cytoskeleton. The protein localises to the microtubule organizing center. It localises to the centrosome. The protein resides in the cilium axoneme. It is found in the cilium basal body. As a component of the IFT complex A (IFT-A), a complex required for retrograde ciliary transport and entry into cilia of G protein-coupled receptors (GPCRs), it is involved in ciliogenesis and ciliary protein trafficking. May promote CASP3 activation and TNF-stimulated apoptosis. The chain is WD repeat-containing protein 35 from Mus musculus (Mouse).